Here is a 304-residue protein sequence, read N- to C-terminus: Mas-related G-protein coupled receptor member A1 (304 aa).

The Extracellular segment spans residues 1–17; the sequence is MDNTIPGGINITILIPN. Residue asparagine 10 is glycosylated (N-linked (GlcNAc...) asparagine). Residues 18-38 form a helical membrane-spanning segment; it reads LMIIIFGLVGLTGNGIVFWLL. Residues 39–53 lie on the Cytoplasmic side of the membrane; the sequence is GFCLHRNAFSVYILN. The chain crosses the membrane as a helical span at residues 54–74; it reads LALADFFFLLGHIIDSILLLL. A topological domain (extracellular) is located at residue asparagine 75. A helical membrane pass occupies residues 76–96; it reads VFYPITFLLCFYTIMMVLYIA. At 97–131 the chain is on the cytoplasmic side; the sequence is GLSMLSAISTERCLSVLCPIWYHCHRPEHTSTVMC. Residues 132–152 traverse the membrane as a helical segment; it reads AVIWVLSLLICILNSYFCGFL. The Extracellular segment spans residues 153-166; it reads NTQYKNENGCLALN. The helical transmembrane segment at 167 to 187 threads the bilayer; that stretch reads FFTAAYLMFLFVVLCLSSLAL. Residues 188-206 lie on the Cytoplasmic side of the membrane; that stretch reads VARLFCGTGQIKLTRLYVT. A helical membrane pass occupies residues 207–227; it reads IILSILVFLLCGLPFGIHWFL. Over 228-243 the chain is Extracellular; it reads LFKIKDDFHVFDLGFY. A helical transmembrane segment spans residues 244-264; sequence LASVVLTAINSCANPIIYFFV. The Cytoplasmic portion of the chain corresponds to 265 to 304; sequence GSFRHRLKHQTLKMVLQNALQDTPETAKIMVEMSRSKSEP.

Belongs to the G-protein coupled receptor 1 family. Mas subfamily. In terms of tissue distribution, expressed in a subset of sensory neurons that includes nociceptors. Expressed in the subclass of non-peptidergic sensory neurons that are IB4(+) and VR1(-).

It is found in the cell membrane. Orphan receptor activated by a subset of RFamide-family neuropeptides such as FLRF-amide and FMRF-amide. Mediates its action by association with G proteins that activate a phosphatidylinositol-calcium second messenger system. Its effect is mediated by G(q) and G(11) proteins. May regulate the function of nociceptive neurons by modulation of pain perception. This chain is Mas-related G-protein coupled receptor member A1 (Mrgpra1), found in Mus musculus (Mouse).